The following is a 352-amino-acid chain: MAIISSNIDDNDFSLRKKELRLVDSKVIPEEKKNNNLNLARPLNFKEFIGQEQLKSSLRIAIDASIFRKEPLEHTLLYGQPGLGKTTLAFLIAHELKTKCRIATAPAIERPRDIVGLLLGLKEGEVLFIDEIHRLNRLTEELLYSAMEDFRLDLTMGANRGARCRTINLPRFTLIGATTKLASISAPLRDRFGISQKIEFYTYDELKQIIVNFSRLINLNLDDEASYDLAKISRGTPRIALRLLRRVRDYAQVVMKTNNISVNLIKKALNSYQIDEKGLDSLDRNYLFFLNQNKNIPIGLDSIAAGLGDDSSMLEFVVEPYLIKIGFLTRTPRGRLLTALGKKYIDSKNENF.

The segment at 13–201 (FSLRKKELRL…FGISQKIEFY (189 aa)) is large ATPase domain (RuvB-L). ATP is bound by residues R41, G82, K85, T86, T87, 148-150 (EDF), R191, Y201, and R238. T86 is a binding site for Mg(2+). The segment at 202 to 273 (TYDELKQIIV…LIKKALNSYQ (72 aa)) is small ATPAse domain (RuvB-S). A head domain (RuvB-H) region spans residues 276-352 (EKGLDSLDRN…KYIDSKNENF (77 aa)). Positions 330 and 335 each coordinate DNA.

This sequence belongs to the RuvB family. Homohexamer. Forms an RuvA(8)-RuvB(12)-Holliday junction (HJ) complex. HJ DNA is sandwiched between 2 RuvA tetramers; dsDNA enters through RuvA and exits via RuvB. An RuvB hexamer assembles on each DNA strand where it exits the tetramer. Each RuvB hexamer is contacted by two RuvA subunits (via domain III) on 2 adjacent RuvB subunits; this complex drives branch migration. In the full resolvosome a probable DNA-RuvA(4)-RuvB(12)-RuvC(2) complex forms which resolves the HJ.

It is found in the cytoplasm. The enzyme catalyses ATP + H2O = ADP + phosphate + H(+). The RuvA-RuvB-RuvC complex processes Holliday junction (HJ) DNA during genetic recombination and DNA repair, while the RuvA-RuvB complex plays an important role in the rescue of blocked DNA replication forks via replication fork reversal (RFR). RuvA specifically binds to HJ cruciform DNA, conferring on it an open structure. The RuvB hexamer acts as an ATP-dependent pump, pulling dsDNA into and through the RuvAB complex. RuvB forms 2 homohexamers on either side of HJ DNA bound by 1 or 2 RuvA tetramers; 4 subunits per hexamer contact DNA at a time. Coordinated motions by a converter formed by DNA-disengaged RuvB subunits stimulates ATP hydrolysis and nucleotide exchange. Immobilization of the converter enables RuvB to convert the ATP-contained energy into a lever motion, pulling 2 nucleotides of DNA out of the RuvA tetramer per ATP hydrolyzed, thus driving DNA branch migration. The RuvB motors rotate together with the DNA substrate, which together with the progressing nucleotide cycle form the mechanistic basis for DNA recombination by continuous HJ branch migration. Branch migration allows RuvC to scan DNA until it finds its consensus sequence, where it cleaves and resolves cruciform DNA. This Prochlorococcus marinus (strain MIT 9215) protein is Holliday junction branch migration complex subunit RuvB.